We begin with the raw amino-acid sequence, 411 residues long: 1-deoxy-D-xylulose 5-phosphate reductoisomerase (411 aa).

NADPH contacts are provided by Thr-11, Gly-12, Ser-13, Ile-14, and Asn-124. Lys-125 is a 1-deoxy-D-xylulose 5-phosphate binding site. Position 126 (Glu-126) interacts with NADPH. Asp-150 lines the Mn(2+) pocket. 4 residues coordinate 1-deoxy-D-xylulose 5-phosphate: Ser-151, Glu-152, Ser-186, and His-209. A Mn(2+)-binding site is contributed by Glu-152. Gly-215 provides a ligand contact to NADPH. Ser-222, Asn-227, Lys-228, and Glu-231 together coordinate 1-deoxy-D-xylulose 5-phosphate. Glu-231 is a Mn(2+) binding site.

The protein belongs to the DXR family. Mg(2+) serves as cofactor. The cofactor is Mn(2+).

The catalysed reaction is 2-C-methyl-D-erythritol 4-phosphate + NADP(+) = 1-deoxy-D-xylulose 5-phosphate + NADPH + H(+). Its pathway is isoprenoid biosynthesis; isopentenyl diphosphate biosynthesis via DXP pathway; isopentenyl diphosphate from 1-deoxy-D-xylulose 5-phosphate: step 1/6. In terms of biological role, catalyzes the NADPH-dependent rearrangement and reduction of 1-deoxy-D-xylulose-5-phosphate (DXP) to 2-C-methyl-D-erythritol 4-phosphate (MEP). The chain is 1-deoxy-D-xylulose 5-phosphate reductoisomerase from Psychrobacter sp. (strain PRwf-1).